A 372-amino-acid chain; its full sequence is Adaptive-response sensory kinase SasA (372 aa).

The region spanning 147–360 (MVAHELRTPL…CFHFTVPVWQ (214 aa)) is the Histidine kinase domain. His150 is modified (phosphohistidine; by autocatalysis).

Homooligomerizes. Interacts with KaiC. Participates in the KaiBC complex, whose core is composed of a KaiC homohexamer and 6 KaiB.

It catalyses the reaction ATP + protein L-histidine = ADP + protein N-phospho-L-histidine.. In terms of biological role, member of the two-component regulatory system SasA/RpaA involved in genome-wide circadian gene expression. One of several clock output pathways. Participates in the Kai clock protein complex, the main circadian regulator in cyanobacteria, via its interaction with KaiC. KaiC enhances the autophosphorylation activity of SasA, which then transfers its phosphate group to RpaA to activate it. In addition to its output function, recruits fold-shifted KaiB (KaiB(fs)) to KaiC to cooperatively form the KaiB(6):KaiC(6) complex (independent of SasA kinase activity). Required for robustness of the circadian rhythm of gene expression and is involved in clock output, also required for adaptation to light/dark cycles. In Prochlorococcus marinus (strain MIT 9215), this protein is Adaptive-response sensory kinase SasA.